The sequence spans 148 residues: Glutamate mutase sigma subunit 2 (148 aa).

The region spanning 1–134 (MRTVILGVIG…EALKADLGHR (134 aa)) is the B12-binding domain. Residues 11–15 (SDAHV), histidine 14, 59–61 (SSL), and 90–94 (NLAVG) each bind adenosylcob(III)alamin. Positions 129–141 (ADLGHRSREEASS) are enriched in basic and acidic residues. Positions 129-148 (ADLGHRSREEASSEKVQLGS) are disordered.

Belongs to the methylaspartate mutase GlmS subunit family. In terms of assembly, heterotetramer composed of 2 epsilon subunits (GlmE) and 2 sigma subunits (GlmS). GlmE exists as a homodimer and GlmS as a monomer. Adenosylcob(III)alamin is required as a cofactor.

The enzyme catalyses (2S,3S)-3-methyl-L-aspartate = L-glutamate. It functions in the pathway amino-acid degradation; L-glutamate degradation via mesaconate pathway; acetate and pyruvate from L-glutamate: step 1/4. Catalyzes the carbon skeleton rearrangement of L-glutamate to L-threo-3-methylaspartate ((2S,3S)-3-methylaspartate). The sequence is that of Glutamate mutase sigma subunit 2 from Haloarcula marismortui (strain ATCC 43049 / DSM 3752 / JCM 8966 / VKM B-1809) (Halobacterium marismortui).